We begin with the raw amino-acid sequence, 665 residues long: UvrABC system protein B (665 aa).

The 152-residue stretch at 25–176 (NSIEKGNRFQ…NQRQLLRDLV (152 aa)) folds into the Helicase ATP-binding domain. 38-45 (GATGTGKT) serves as a coordination point for ATP. Residues 91 to 114 (YYDYYQPEAYIPVSDTYIEKSASI) carry the Beta-hairpin motif. Residues 429–595 (QVDDLLGEIK…PIVTRSSNAI (167 aa)) enclose the Helicase C-terminal domain. Residues 626–661 (PELIGQLEEQMKEAAKKLEFEEAAKYRDRIQHLRDK) enclose the UVR domain.

This sequence belongs to the UvrB family. In terms of assembly, forms a heterotetramer with UvrA during the search for lesions. Interacts with UvrC in an incision complex.

Its subcellular location is the cytoplasm. Functionally, the UvrABC repair system catalyzes the recognition and processing of DNA lesions. A damage recognition complex composed of 2 UvrA and 2 UvrB subunits scans DNA for abnormalities. Upon binding of the UvrA(2)B(2) complex to a putative damaged site, the DNA wraps around one UvrB monomer. DNA wrap is dependent on ATP binding by UvrB and probably causes local melting of the DNA helix, facilitating insertion of UvrB beta-hairpin between the DNA strands. Then UvrB probes one DNA strand for the presence of a lesion. If a lesion is found the UvrA subunits dissociate and the UvrB-DNA preincision complex is formed. This complex is subsequently bound by UvrC and the second UvrB is released. If no lesion is found, the DNA wraps around the other UvrB subunit that will check the other stand for damage. The chain is UvrABC system protein B from Gloeothece citriformis (strain PCC 7424) (Cyanothece sp. (strain PCC 7424)).